Reading from the N-terminus, the 87-residue chain is Putative defensin-like protein 231 (87 aa).

The signal sequence occupies residues 1 to 26 (MKFATCFLVSYVLVFLVLSVCKEVEA). Cystine bridges form between Cys30-Cys85, Cys40-Cys66, Cys48-Cys79, and Cys64-Cys81.

Belongs to the DEFL family.

The protein resides in the secreted. This Arabidopsis thaliana (Mouse-ear cress) protein is Putative defensin-like protein 231 (SCRL25).